Here is a 225-residue protein sequence, read N- to C-terminus: Pyridoxine/pyridoxamine 5'-phosphate oxidase (225 aa).

Residues 9–12 (RVDY) and K78 contribute to the substrate site. Residues 73-78 (RTVLCK), 88-89 (YT), K95, and Q117 each bind FMN. Y135, R139, and S143 together coordinate substrate. FMN-binding positions include 152–153 (QS) and W198. 204–206 (RLH) serves as a coordination point for substrate. R208 lines the FMN pocket.

Belongs to the pyridoxamine 5'-phosphate oxidase family. In terms of assembly, homodimer. It depends on FMN as a cofactor.

The enzyme catalyses pyridoxamine 5'-phosphate + O2 + H2O = pyridoxal 5'-phosphate + H2O2 + NH4(+). It carries out the reaction pyridoxine 5'-phosphate + O2 = pyridoxal 5'-phosphate + H2O2. It functions in the pathway cofactor metabolism; pyridoxal 5'-phosphate salvage; pyridoxal 5'-phosphate from pyridoxamine 5'-phosphate: step 1/1. It participates in cofactor metabolism; pyridoxal 5'-phosphate salvage; pyridoxal 5'-phosphate from pyridoxine 5'-phosphate: step 1/1. Functionally, catalyzes the oxidation of either pyridoxine 5'-phosphate (PNP) or pyridoxamine 5'-phosphate (PMP) into pyridoxal 5'-phosphate (PLP). The polypeptide is Pyridoxine/pyridoxamine 5'-phosphate oxidase (Nocardia farcinica (strain IFM 10152)).